Reading from the N-terminus, the 226-residue chain is Enolase-phosphatase E1 (226 aa).

It belongs to the HAD-like hydrolase superfamily. MasA/MtnC family. In terms of assembly, monomer. The cofactor is Mg(2+).

The catalysed reaction is 5-methylsulfanyl-2,3-dioxopentyl phosphate + H2O = 1,2-dihydroxy-5-(methylsulfanyl)pent-1-en-3-one + phosphate. It participates in amino-acid biosynthesis; L-methionine biosynthesis via salvage pathway; L-methionine from S-methyl-5-thio-alpha-D-ribose 1-phosphate: step 3/6. It functions in the pathway amino-acid biosynthesis; L-methionine biosynthesis via salvage pathway; L-methionine from S-methyl-5-thio-alpha-D-ribose 1-phosphate: step 4/6. In terms of biological role, bifunctional enzyme that catalyzes the enolization of 2,3-diketo-5-methylthiopentyl-1-phosphate (DK-MTP-1-P) into the intermediate 2-hydroxy-3-keto-5-methylthiopentenyl-1-phosphate (HK-MTPenyl-1-P), which is then dephosphorylated to form the acireductone 1,2-dihydroxy-3-keto-5-methylthiopentene (DHK-MTPene). In Shewanella sp. (strain ANA-3), this protein is Enolase-phosphatase E1.